We begin with the raw amino-acid sequence, 485 residues long: Acyltransferase cm3D (485 aa).

The active-site Proton acceptor is H169.

This sequence belongs to the plant acyltransferase family. In terms of assembly, monomer.

It functions in the pathway secondary metabolite biosynthesis. Acyltransferase; part of the gene cluster that mediates the biosynthesis of beauveriolides I and III, cyclodepsipeptides acting as inhibitors of the acyl-CoA:cholesterol acyltransferase. The HR-PKS cm3B initiates the biosynthesis of beauveriolides by iteratively catalyzing the formation of the linear polyketide chain. The ATP-dependent acetyl-CoA ligase cm3D converts the polyketide carboxylic acid to a CoA thioester which id shuttled to the first T domain in the NRPS cm3A by the acetyltransferase cm3C. Cm3A contains 13 domains and assembles the polyketide chain, L-phenylalanine, L-alanine, and D-leucine (or D-allo-isoleucine) to form beauveriolide I (or beauveriolide III). The production of both beauveriolides I and III suggests the substrate adaptability of cm3B, using different amino acids as substrates. The sequence is that of Acyltransferase cm3D from Cordyceps militaris (strain CM01) (Caterpillar fungus).